Consider the following 497-residue polypeptide: Reticulophagy regulator 1 (497 aa).

Positions 1-51 (MASPAPPEHAEEGCPAPAAEEQAPPSPPPPQASPAERQQQEEEAQEAGAAE) are disordered. Residues 1–59 (MASPAPPEHAEEGCPAPAAEEQAPPSPPPPQASPAERQQQEEEAQEAGAAEGAGLQVEE) are Cytoplasmic-facing. Positions 13–23 (GCPAPAAEEQA) are enriched in low complexity. The chain crosses the membrane as a helical span at residues 60-80 (AAGRAAAAVTWLLGEPVLWLG). Residues 81 to 95 (CRADELLSWKRPLRS) are Lumenal-facing. The reticulon homology domain stretch occupies residues 84–233 (DELLSWKRPL…LLCAFLCPLF (150 aa)). Residues 96–116 (LLGFVAANLLFWFLALTPWRV) form a helical membrane-spanning segment. The Cytoplasmic portion of the chain corresponds to 117–118 (YH). A helical transmembrane segment spans residues 119–139 (LISVMILGRVIMQIIKDMVLS). Topologically, residues 140-208 (RTRGAQLWRS…LVCSVCTFFT (69 aa)) are lumenal. Serine 149 is modified (phosphoserine). Position 151 is a phosphoserine; by CAMK2B (serine 151). The residue at position 153 (serine 153) is a Phosphoserine. A helical membrane pass occupies residues 209–229 (ILGSYIPGVILSYLLLLCAFL). Residues 230–497 (CPLFKCNDIG…GFLSNLLGGH (268 aa)) lie on the Cytoplasmic side of the membrane. Over residues 319 to 330 (FNLSEGYTPQTD) the composition is skewed to polar residues. Disordered stretches follow at residues 319–365 (FNLS…EDEL), 377–396 (KEQLDSGHRPSKETQSAAGL), 436–455 (LSQAAPIPEEDTDTEEGDDF), and 468–497 (SELGLTQDQEAEAQQNKKSSGFLSNLLGGH). 2 stretches are compositionally biased toward basic and acidic residues: residues 334–348 (DLDRPSEEVFSRDLS) and 377–388 (KEQLDSGHRPSK). Acidic residues predominate over residues 443 to 455 (PEEDTDTEEGDDF). The LIR motif signature appears at 453-458 (DDFELL). Residues 471-490 (GLTQDQEAEAQQNKKSSGFL) are compositionally biased toward polar residues.

This sequence belongs to the RETREG family. In terms of assembly, homooligomer; oligomerization is enhanced following endoplasmic reticulum stress and is mediated by the reticulon homology domain. Interacts with ATG8 family modifier proteins MAP1LC3A, MAP1LC3B, MAP1LC3C, GABARAP, GABARAPL1 and GABARAPL2. Shows higher affinity for GABARAPL1 than for MAP1LC3A or MAP1LC3B. Phosphorylation at Ser-151 by CAMK2B enhances oligomerization and membrane scission and reticulophagy activity. As to expression, overexpressed in esophageal squamous cell carcinoma.

Its subcellular location is the golgi apparatus. The protein localises to the cis-Golgi network membrane. It is found in the endoplasmic reticulum membrane. In terms of biological role, endoplasmic reticulum (ER)-anchored autophagy regulator which mediates ER delivery into lysosomes through sequestration into autophagosomes. Promotes membrane remodeling and ER scission via its membrane bending capacity and targets the fragments into autophagosomes via interaction with ATG8 family proteins. Active under basal conditions. Required for collagen quality control in a LIR motif-dependent manner. Required for long-term survival of nociceptive and autonomic ganglion neurons. Functionally, (Microbial infection) During SARS-CoV-2 infection, RETREG1-mediated reticulophagy is promoted by SARS-CoV-2 ORF3A protein. This induces endoplasmic reticulum stress and inflammatory responses and facilitates viral infection. The polypeptide is Reticulophagy regulator 1 (Homo sapiens (Human)).